The chain runs to 472 residues: Mothers against decapentaplegic homolog 1 (472 aa).

The MH1 domain maps to 12–136; it reads PAVKRLLGWK…YKRVDSPVLP (125 aa). Residues cysteine 64, cysteine 109, cysteine 121, and histidine 126 each contribute to the Zn(2+) site. A disordered region spans residues 158–238; that stretch reads NPLHQTEPPM…PPPAYMPPEE (81 aa). The segment covering 169–182 has biased composition (polar residues); sequence QNATFPDSFPQQPA. Residues 188–226 show a composition bias toward low complexity; that stretch reads TPNSPTNSYPSSPNSGTGSTATFPHSPSSSDPGSPFQMP. Residues 227–238 show a composition bias toward pro residues; sequence ETPPPAYMPPEE. The MH2 domain occupies 278 to 472; that stretch reads WCSIVYYELN…SPHNPISSVS (195 aa).

The protein belongs to the dwarfin/SMAD family. May form trimers with another Smad1 and the co-Smad Smad4.

It is found in the cytoplasm. The protein localises to the nucleus. Its function is as follows. Involved in ventralization. May mediate Bmp2b signaling during embryonic dorsal-ventral pattern formation, and may itself be a transcriptional target for Smad5-mediated Bmp2b signaling. The polypeptide is Mothers against decapentaplegic homolog 1 (smad1) (Danio rerio (Zebrafish)).